The primary structure comprises 78 residues: Small ribosomal subunit protein bS16c (78 aa).

It belongs to the bacterial ribosomal protein bS16 family.

The protein localises to the plastid. Its subcellular location is the chloroplast. The polypeptide is Small ribosomal subunit protein bS16c (Adiantum capillus-veneris (Maidenhair fern)).